Consider the following 355-residue polypeptide: Epoxyqueuosine reductase (355 aa).

The Proton donor role is filled by D143. Residues 185-217 (LPLPIDTPATAHCGTCTRCIDICPTQAIIAPHR) form the 4Fe-4S ferredoxin-type domain. Residues C197, C200, C203, C207, C223, C250, C253, and C257 each coordinate [4Fe-4S] cluster.

Belongs to the QueG family. In terms of assembly, monomer. Cob(II)alamin serves as cofactor. Requires [4Fe-4S] cluster as cofactor.

Its subcellular location is the cytoplasm. It catalyses the reaction epoxyqueuosine(34) in tRNA + AH2 = queuosine(34) in tRNA + A + H2O. It participates in tRNA modification; tRNA-queuosine biosynthesis. In terms of biological role, catalyzes the conversion of epoxyqueuosine (oQ) to queuosine (Q), which is a hypermodified base found in the wobble positions of tRNA(Asp), tRNA(Asn), tRNA(His) and tRNA(Tyr). This chain is Epoxyqueuosine reductase, found in Xanthomonas campestris pv. campestris (strain ATCC 33913 / DSM 3586 / NCPPB 528 / LMG 568 / P 25).